Reading from the N-terminus, the 157-residue chain is Endoribonuclease YbeY (157 aa).

Residues H122, H126, and H132 each contribute to the Zn(2+) site.

This sequence belongs to the endoribonuclease YbeY family. Requires Zn(2+) as cofactor.

The protein localises to the cytoplasm. In terms of biological role, single strand-specific metallo-endoribonuclease involved in late-stage 70S ribosome quality control and in maturation of the 3' terminus of the 16S rRNA. This is Endoribonuclease YbeY from Bacillus velezensis (strain DSM 23117 / BGSC 10A6 / LMG 26770 / FZB42) (Bacillus amyloliquefaciens subsp. plantarum).